Here is a 434-residue protein sequence, read N- to C-terminus: Enolase (434 aa).

Residue glutamine 163 participates in (2R)-2-phosphoglycerate binding. The active-site Proton donor is the glutamate 205. The Mg(2+) site is built by aspartate 242, glutamate 291, and aspartate 318. 4 residues coordinate (2R)-2-phosphoglycerate: lysine 343, arginine 372, serine 373, and lysine 394. Lysine 343 (proton acceptor) is an active-site residue.

It belongs to the enolase family. Mg(2+) serves as cofactor.

The protein resides in the cytoplasm. It localises to the secreted. The protein localises to the cell surface. It catalyses the reaction (2R)-2-phosphoglycerate = phosphoenolpyruvate + H2O. The protein operates within carbohydrate degradation; glycolysis; pyruvate from D-glyceraldehyde 3-phosphate: step 4/5. In terms of biological role, catalyzes the reversible conversion of 2-phosphoglycerate (2-PG) into phosphoenolpyruvate (PEP). It is essential for the degradation of carbohydrates via glycolysis. The chain is Enolase from Streptococcus pneumoniae serotype 19F (strain G54).